We begin with the raw amino-acid sequence, 623 residues long: DNA-directed RNA polymerase subunit gamma (623 aa).

Zn(2+) contacts are provided by Cys-70, Cys-72, Cys-85, and Cys-88. The Mg(2+) site is built by Asp-466, Asp-468, and Asp-470.

Belongs to the RNA polymerase beta' chain family. RpoC1 subfamily. In terms of assembly, in cyanobacteria the RNAP catalytic core is composed of 2 alpha, 1 beta, 1 beta', 1 gamma and 1 omega subunit. When a sigma factor is associated with the core the holoenzyme is formed, which can initiate transcription. Mg(2+) is required as a cofactor. The cofactor is Zn(2+).

It carries out the reaction RNA(n) + a ribonucleoside 5'-triphosphate = RNA(n+1) + diphosphate. Its function is as follows. DNA-dependent RNA polymerase catalyzes the transcription of DNA into RNA using the four ribonucleoside triphosphates as substrates. This Acaryochloris marina (strain MBIC 11017) protein is DNA-directed RNA polymerase subunit gamma.